Reading from the N-terminus, the 271-residue chain is uncharacterized protein (271 aa).

Belongs to the anhydro-N-acetylmuramic acid kinase family.

This is an uncharacterized protein from Yersinia enterocolitica.